Reading from the N-terminus, the 165-residue chain is Growth arrest and DNA damage-inducible protein GADD45 alpha (165 aa).

Residue Thr-2 is modified to Phosphothreonine.

The protein belongs to the GADD45 family. In terms of assembly, interacts with AURKA, PCNA, GADD45GIP1 and MAPK14.

Its subcellular location is the nucleus. Might affect PCNA interaction with some CDK (cell division protein kinase) complexes; stimulates DNA excision repair in vitro and inhibits entry of cells into S phase. In T-cells, functions as a regulator of p38 MAPKs by inhibiting p88 phosphorylation and activity. In Bos taurus (Bovine), this protein is Growth arrest and DNA damage-inducible protein GADD45 alpha (GADD45A).